Consider the following 468-residue polypeptide: Eukaryotic translation initiation factor 3 subunit M (468 aa).

The interval 40 to 61 is disordered; sequence VAPLIEPLRQQEQSEEEPDRKQ. The PCI domain maps to 206 to 377; it reads DLELAQTHVV…SEFLVHRATY (172 aa). A disordered region spans residues 419 to 468; it reads QAAAEEVGQGKSGDKGAKGGDRRRNPQQQQQSQPSQPQQAREVELVGGAE. Basic and acidic residues predominate over residues 430-442; sequence SGDKGAKGGDRRR. The segment covering 444–457 has biased composition (low complexity); that stretch reads PQQQQQSQPSQPQQ.

This sequence belongs to the eIF-3 subunit M family. Component of the eukaryotic translation initiation factor 3 (eIF-3) complex.

Its subcellular location is the cytoplasm. Component of the eukaryotic translation initiation factor 3 (eIF-3) complex, which is involved in protein synthesis of a specialized repertoire of mRNAs and, together with other initiation factors, stimulates binding of mRNA and methionyl-tRNAi to the 40S ribosome. The eIF-3 complex specifically targets and initiates translation of a subset of mRNAs involved in cell proliferation. This chain is Eukaryotic translation initiation factor 3 subunit M, found in Aspergillus fumigatus (strain CBS 144.89 / FGSC A1163 / CEA10) (Neosartorya fumigata).